Here is a 351-residue protein sequence, read N- to C-terminus: V-type proton ATPase subunit d1 (351 aa).

The protein belongs to the V-ATPase V0D/AC39 subunit family. As to quaternary structure, V-ATPase is a heteromultimeric enzyme composed of a peripheral catalytic V1 complex (components A to H) attached to an integral membrane V0 proton pore complex (components: a, c, c'', d and e).

The protein localises to the vacuole membrane. In terms of biological role, subunit of the integral membrane V0 complex of vacuolar ATPase. Vacuolar ATPase is responsible for acidifying a variety of intracellular compartments in eukaryotic cells, thus providing most of the energy required for transport processes in the vacuolar system. This Arabidopsis thaliana (Mouse-ear cress) protein is V-type proton ATPase subunit d1 (VHA-d1).